A 153-amino-acid polypeptide reads, in one-letter code: Large ribosomal subunit protein uL22 (153 aa).

The tract at residues A128–A153 is disordered. Residues A137 to A147 are compositionally biased toward low complexity.

This sequence belongs to the universal ribosomal protein uL22 family. Part of the 50S ribosomal subunit.

This protein binds specifically to 23S rRNA; its binding is stimulated by other ribosomal proteins, e.g. L4, L17, and L20. It is important during the early stages of 50S assembly. It makes multiple contacts with different domains of the 23S rRNA in the assembled 50S subunit and ribosome. Functionally, the globular domain of the protein is located near the polypeptide exit tunnel on the outside of the subunit, while an extended beta-hairpin is found that lines the wall of the exit tunnel in the center of the 70S ribosome. This is Large ribosomal subunit protein uL22 from Acidiphilium cryptum (strain JF-5).